Consider the following 301-residue polypeptide: Protein translocase subunit SecF (301 aa).

The next 6 membrane-spanning stretches (helical) occupy residues 17 to 37 (YIAL…IFQI), 137 to 157 (DALF…AIRF), 163 to 183 (IGAT…FYIL), 190 to 210 (IFIS…VVVF), 239 to 261 (LSRT…FFGG), and 272 to 292 (ILGI…VVLL).

The protein belongs to the SecD/SecF family. SecF subfamily. Forms a complex with SecD. Part of the essential Sec protein translocation apparatus which comprises SecA, SecYEG and auxiliary proteins SecDF. Other proteins may also be involved.

Its subcellular location is the cell inner membrane. Its function is as follows. Part of the Sec protein translocase complex. Interacts with the SecYEG preprotein conducting channel. SecDF uses the proton motive force (PMF) to complete protein translocation after the ATP-dependent function of SecA. This is Protein translocase subunit SecF from Thermodesulfovibrio yellowstonii (strain ATCC 51303 / DSM 11347 / YP87).